We begin with the raw amino-acid sequence, 509 residues long: Cobyric acid synthase (509 aa).

The 198-residue stretch at 262-459 folds into the GATase cobBQ-type domain; the sequence is EIKVGIIKLP…IHGIFENDNW (198 aa). Cys343 (nucleophile) is an active-site residue. His451 is a catalytic residue.

It belongs to the CobB/CobQ family. CobQ subfamily.

Its pathway is cofactor biosynthesis; adenosylcobalamin biosynthesis. Functionally, catalyzes amidations at positions B, D, E, and G on adenosylcobyrinic A,C-diamide. NH(2) groups are provided by glutamine, and one molecule of ATP is hydrogenolyzed for each amidation. This chain is Cobyric acid synthase, found in Prochlorococcus marinus (strain AS9601).